Here is a 398-residue protein sequence, read N- to C-terminus: Acetate kinase (398 aa).

Asparagine 10 contacts Mg(2+). Lysine 17 is a binding site for ATP. A substrate-binding site is contributed by arginine 91. Catalysis depends on aspartate 148, which acts as the Proton donor/acceptor. Residues 208-212 (HLGNG), 283-285 (DCR), and 331-335 (GIGEN) contribute to the ATP site. Glutamate 385 is a Mg(2+) binding site.

Belongs to the acetokinase family. Homodimer. Requires Mg(2+) as cofactor. The cofactor is Mn(2+).

The protein localises to the cytoplasm. The enzyme catalyses acetate + ATP = acetyl phosphate + ADP. The protein operates within metabolic intermediate biosynthesis; acetyl-CoA biosynthesis; acetyl-CoA from acetate: step 1/2. Catalyzes the formation of acetyl phosphate from acetate and ATP. Can also catalyze the reverse reaction. The polypeptide is Acetate kinase (Shewanella woodyi (strain ATCC 51908 / MS32)).